A 298-amino-acid chain; its full sequence is Probable 2-(5''-triphosphoribosyl)-3'-dephosphocoenzyme-A synthase 2 (298 aa).

It belongs to the CitG/MdcB family.

It carries out the reaction 3'-dephospho-CoA + ATP = 2'-(5''-triphospho-alpha-D-ribosyl)-3'-dephospho-CoA + adenine. This is Probable 2-(5''-triphosphoribosyl)-3'-dephosphocoenzyme-A synthase 2 from Salmonella typhi.